A 152-amino-acid polypeptide reads, in one-letter code: MSDTIAVEIKQLPHAEGLPLPAYQSAHAAGLDLCAANSADAPLLLAPGSYVLVPTGLTIALPENYEAQVRPRSGLAAKHGVTVLNAPGTIDADYRGEIGVLLINHGDAPFTIRRGERIAQMVIAPVVRAELIGVETLSETARGVGGFGSTGR.

Substrate contacts are provided by residues 72–74, Asn-85, and 89–91; these read RSG and TID.

It belongs to the dUTPase family. Mg(2+) is required as a cofactor.

It carries out the reaction dUTP + H2O = dUMP + diphosphate + H(+). It functions in the pathway pyrimidine metabolism; dUMP biosynthesis; dUMP from dCTP (dUTP route): step 2/2. In terms of biological role, this enzyme is involved in nucleotide metabolism: it produces dUMP, the immediate precursor of thymidine nucleotides and it decreases the intracellular concentration of dUTP so that uracil cannot be incorporated into DNA. This chain is Deoxyuridine 5'-triphosphate nucleotidohydrolase, found in Rhodopseudomonas palustris (strain BisB5).